The following is a 166-amino-acid chain: Phosphopantetheine adenylyltransferase (166 aa).

S11 is a binding site for substrate. Residues 11 to 12 and H19 each bind ATP; that span reads SF. Substrate is bound by residues K43, A76, and R90. ATP-binding positions include 91–93, E101, and 126–132; these read GLR and LQPVSSS.

Belongs to the bacterial CoaD family. In terms of assembly, homohexamer. It depends on Mg(2+) as a cofactor.

Its subcellular location is the cytoplasm. It carries out the reaction (R)-4'-phosphopantetheine + ATP + H(+) = 3'-dephospho-CoA + diphosphate. Its pathway is cofactor biosynthesis; coenzyme A biosynthesis; CoA from (R)-pantothenate: step 4/5. Its function is as follows. Reversibly transfers an adenylyl group from ATP to 4'-phosphopantetheine, yielding dephospho-CoA (dPCoA) and pyrophosphate. This Streptococcus equi subsp. equi (strain 4047) protein is Phosphopantetheine adenylyltransferase.